A 1070-amino-acid polypeptide reads, in one-letter code: DNA-directed RNA polymerase subunit beta (1070 aa).

Belongs to the RNA polymerase beta chain family. In terms of assembly, in plastids the minimal PEP RNA polymerase catalytic core is composed of four subunits: alpha, beta, beta', and beta''. When a (nuclear-encoded) sigma factor is associated with the core the holoenzyme is formed, which can initiate transcription.

Its subcellular location is the plastid. It localises to the chloroplast. It carries out the reaction RNA(n) + a ribonucleoside 5'-triphosphate = RNA(n+1) + diphosphate. Its function is as follows. DNA-dependent RNA polymerase catalyzes the transcription of DNA into RNA using the four ribonucleoside triphosphates as substrates. In Spinacia oleracea (Spinach), this protein is DNA-directed RNA polymerase subunit beta.